A 1746-amino-acid chain; its full sequence is tRNA (32-2'-O)-methyltransferase regulator THADA (1746 aa).

Residues 1252-1286 adopt a coiled-coil conformation; it reads EQALAEIRRIVVELKALQLRLKNTEAANTKLNTNV.

This sequence belongs to the THADA family. As to quaternary structure, interacts with SERCA. As to expression, detected in the larval fat body, salivary glands and wing imaginal disks (at protein level).

The protein resides in the endoplasmic reticulum. In terms of biological role, together with methyltransferase Trm7-32, methylates the 2'-O-ribose of nucleotides at position 32 of the anticodon loop of substrate tRNAs. Plays a key role in energy homeostasis by regulating the balance between energy storage and heat production. Functions by negatively regulating Ca(2+) signaling pathways that are involved in heat production and maintaining correct lipid storage in the fat body. Regulates Ca(2+) signaling pathways by reducing the activity of the calcium-transporting ATPase SERCA possibly by promoting uncoupling of SERCA ATP hydrolysis from calcium pumping. May also function in the nervous system to control feeding behavior. This is tRNA (32-2'-O)-methyltransferase regulator THADA from Drosophila melanogaster (Fruit fly).